Here is a 322-residue protein sequence, read N- to C-terminus: tRNA U34 carboxymethyltransferase (322 aa).

Carboxy-S-adenosyl-L-methionine-binding positions include lysine 90, tryptophan 104, lysine 109, glycine 129, 151–153, 179–180, methionine 195, tyrosine 199, and arginine 314; these read DPT and ME.

It belongs to the class I-like SAM-binding methyltransferase superfamily. CmoB family. In terms of assembly, homotetramer.

It catalyses the reaction carboxy-S-adenosyl-L-methionine + 5-hydroxyuridine(34) in tRNA = 5-carboxymethoxyuridine(34) in tRNA + S-adenosyl-L-homocysteine + H(+). In terms of biological role, catalyzes carboxymethyl transfer from carboxy-S-adenosyl-L-methionine (Cx-SAM) to 5-hydroxyuridine (ho5U) to form 5-carboxymethoxyuridine (cmo5U) at position 34 in tRNAs. The polypeptide is tRNA U34 carboxymethyltransferase (Alcanivorax borkumensis (strain ATCC 700651 / DSM 11573 / NCIMB 13689 / SK2)).